The primary structure comprises 462 residues: Asparagine--tRNA ligase (462 aa).

This sequence belongs to the class-II aminoacyl-tRNA synthetase family. In terms of assembly, homodimer.

The protein resides in the cytoplasm. It carries out the reaction tRNA(Asn) + L-asparagine + ATP = L-asparaginyl-tRNA(Asn) + AMP + diphosphate + H(+). In Borrelia garinii subsp. bavariensis (strain ATCC BAA-2496 / DSM 23469 / PBi) (Borreliella bavariensis), this protein is Asparagine--tRNA ligase.